The primary structure comprises 122 residues: Large ribosomal subunit protein uL14 (122 aa).

It belongs to the universal ribosomal protein uL14 family. In terms of assembly, part of the 50S ribosomal subunit. Forms a cluster with proteins L3 and L19. In the 70S ribosome, L14 and L19 interact and together make contacts with the 16S rRNA in bridges B5 and B8.

Binds to 23S rRNA. Forms part of two intersubunit bridges in the 70S ribosome. This is Large ribosomal subunit protein uL14 from Gluconobacter oxydans (strain 621H) (Gluconobacter suboxydans).